We begin with the raw amino-acid sequence, 183 residues long: RNA 2',3'-cyclic phosphodiesterase (183 aa).

His-44 (proton donor) is an active-site residue. Short sequence motifs (HXTX) lie at residues 44–47 and 130–133; these read HITL and HMTL. Residue His-130 is the Proton acceptor of the active site.

The protein belongs to the 2H phosphoesterase superfamily. ThpR family.

It carries out the reaction a 3'-end 2',3'-cyclophospho-ribonucleotide-RNA + H2O = a 3'-end 2'-phospho-ribonucleotide-RNA + H(+). Hydrolyzes RNA 2',3'-cyclic phosphodiester to an RNA 2'-phosphomonoester. The sequence is that of RNA 2',3'-cyclic phosphodiesterase (ytlP) from Bacillus subtilis (strain 168).